Reading from the N-terminus, the 252-residue chain is 3-dehydroquinate dehydratase (252 aa).

3-dehydroquinate is bound by residues Ser21, 46–48 (EWR), and Arg82. His143 (proton donor/acceptor) is an active-site residue. Lys170 acts as the Schiff-base intermediate with substrate in catalysis. The 3-dehydroquinate site is built by Arg213, Ser232, and Gln236.

This sequence belongs to the type-I 3-dehydroquinase family. Homodimer.

It carries out the reaction 3-dehydroquinate = 3-dehydroshikimate + H2O. It participates in metabolic intermediate biosynthesis; chorismate biosynthesis; chorismate from D-erythrose 4-phosphate and phosphoenolpyruvate: step 3/7. Functionally, involved in the third step of the chorismate pathway, which leads to the biosynthesis of aromatic amino acids. Catalyzes the cis-dehydration of 3-dehydroquinate (DHQ) and introduces the first double bond of the aromatic ring to yield 3-dehydroshikimate. The chain is 3-dehydroquinate dehydratase from Escherichia coli O8 (strain IAI1).